Reading from the N-terminus, the 75-residue chain is Conotoxin Vc6a (75 aa).

An N-terminal signal peptide occupies residues 1–22; sequence MKLTCVVIVAVLFLTANTFATA. A propeptide spanning residues 23 to 49 is cleaved from the precursor; that stretch reads DDPRNGLENLFLKAHHEMNPEASKLNE. Cystine bridges form between C51–C66, C58–C69, and C65–C74.

As to expression, expressed by the venom duct.

The protein localises to the secreted. The polypeptide is Conotoxin Vc6a (Conus victoriae (Queen Victoria cone)).